The primary structure comprises 394 residues: Anthocyanidin 3-O-glucosyltransferase 6 (394 aa).

The active-site Charge relay is the D37. 8 residues coordinate UDP-alpha-D-glucose: T59, A267, Q269, H284, W287, N288, S289, and E292. Residue A307 coordinates an anthocyanidin. 2 residues coordinate UDP-alpha-D-glucose: E308 and Q309.

The protein belongs to the UDP-glycosyltransferase family. As to expression, expressed in cotyledons and leaves.

It catalyses the reaction an anthocyanidin + UDP-alpha-D-glucose + H(+) = an anthocyanidin 3-O-beta-D-glucoside + UDP. The protein operates within pigment biosynthesis; anthocyanin biosynthesis. Its function is as follows. In the presence of other necessary color factors, this glycosylation reaction allows the accumulation of anthocyanin pigments. May be involved in glycosylation of unstable cyanohydrins to produce stable cyanoglucosides. The chain is Anthocyanidin 3-O-glucosyltransferase 6 (GT6) from Manihot esculenta (Cassava).